We begin with the raw amino-acid sequence, 686 residues long: Chromatin modification-related protein EAF1 (686 aa).

The segment at Q71–K97 is disordered. Residues F202–V280 form the HSA domain. In terms of domain architecture, Myb-like spans I354–K418. Disordered stretches follow at residues R493–T517, A544–R617, and Q657–A686. The segment covering A497–T506 has biased composition (polar residues). Pro residues predominate over residues A554–K568. The span at T574–H588 shows a compositional bias: polar residues. The span at L599 to Q613 shows a compositional bias: low complexity. Residues Q671 to A686 are compositionally biased toward polar residues.

Belongs to the EAF1 family. As to quaternary structure, component of the NuA4 histone acetyltransferase complex.

The protein resides in the nucleus. Component of the NuA4 histone acetyltransferase complex which is involved in transcriptional activation of selected genes principally by acetylation of nucleosomal histone H4 and H2A. The NuA4 complex is also involved in DNA repair. The protein is Chromatin modification-related protein EAF1 (VID21) of Candida albicans (strain SC5314 / ATCC MYA-2876) (Yeast).